The sequence spans 503 residues: uncharacterized protein (503 aa).

Positions 437 to 465 form a coiled coil; sequence LNKDLILENLIETENENDKQEFQKLLRTI.

The protein belongs to the IIV-6 467R family.

This is an uncharacterized protein from Invertebrate iridescent virus 6 (IIV-6).